The primary structure comprises 163 residues: Transcription elongation factor GreB (163 aa).

The stretch at 54 to 76 forms a coiled coil; sequence GKRRMREIDRRIRFLTKRLEAAV.

Belongs to the GreA/GreB family. GreB subfamily.

Its function is as follows. Necessary for efficient RNA polymerase transcription elongation past template-encoded arresting sites. The arresting sites in DNA have the property of trapping a certain fraction of elongating RNA polymerases that pass through, resulting in locked ternary complexes. Cleavage of the nascent transcript by cleavage factors such as GreA or GreB allows the resumption of elongation from the new 3'terminus. GreB releases sequences of up to 9 nucleotides in length. This Neisseria meningitidis serogroup A / serotype 4A (strain DSM 15465 / Z2491) protein is Transcription elongation factor GreB.